The primary structure comprises 1883 residues: Endoribonuclease Dicer homolog 1 (1883 aa).

Disordered stretches follow at residues 71–97 (AESS…PELP), 129–188 (ARKE…DDRR), and 221–262 (RSGT…EKPV). The span at 75–96 (PAPPPPPPPPLPEPVPVAPPEL) shows a compositional bias: pro residues. Composition is skewed to basic and acidic residues over residues 129–138 (ARKEPRRESH) and 228–262 (ESDR…EKPV). Residues 274–413 (VLEQAKSRNT…QEDCAIKIRN (140 aa)) enclose the Helicase ATP-binding domain. 287 to 294 (LETGAGKT) contributes to the ATP binding site. Positions 358 to 361 (DECH) match the DECH box motif. The interval 577-604 (KSETSDVEMQNTEKHNTNDLEEGELPDS) is disordered. The Helicase C-terminal domain maps to 629–789 (LIKILLKYQH…RTDLSHLDGT (161 aa)). One can recognise a Dicer dsRNA-binding fold domain in the interval 817–912 (AVGLIHFYCS…LPDRGSGEGE (96 aa)). Residues 901 to 928 (TLLPDRGSGEGEKTEQNDEGEPLPGTAR) form a disordered region. Residues 907–916 (GSGEGEKTEQ) are compositionally biased toward basic and acidic residues. The region spanning 1163-1296 (HFSDYQNQGK…LPPELCLVHP (134 aa)) is the PAZ domain. 2 RNase III domains span residues 1320 to 1498 (LAVQ…VAGG) and 1538 to 1686 (FDTL…LDSG). Residues Glu-1576, Asp-1672, and Glu-1675 each contribute to the Mg(2+) site. 2 DRBM domains span residues 1712–1775 (HPVR…VLKE) and 1797–1872 (FTRQ…LLNR).

This sequence belongs to the helicase family. Dicer subfamily. May interact with ARGONAUTE1 or PINHEAD through their common PAZ domains. The cofactor is Mg(2+). Mn(2+) is required as a cofactor.

Its subcellular location is the nucleus. Its function is as follows. Involved in the RNA silencing pathway. Cleaves double-stranded RNA to produce microRNAs (miRNAs) of 21-24 nucleotides which target the selective destruction of complementary RNAs. Regulates by this way the development of the plant. May not be involved in small interfering RNAs (siRNAs) production. This chain is Endoribonuclease Dicer homolog 1 (DCL1), found in Oryza sativa subsp. japonica (Rice).